A 244-amino-acid polypeptide reads, in one-letter code: MGQKVNPKGLRVGVIKDWDSRWFADKKDFGDYLVEDHKIRELIKKESFSAGISSVSIERASNKIKVTINTAKPGMVIGRQGAGVEELKNKLEKLTGKKLIINVEEIKFQDLDAQLVAENIASQLERRISFRRAMKQTMQRSMRAGALGIKTMVSGRLGGADMARSEGYSEGTIPLQTLRAAIDYGFAEADTTYGKLGVKVWLYKGEMLPGMTEEDLPVYKNKKNDKNKKRRNNNRKGKSQAAKN.

One can recognise a KH type-2 domain in the interval 39–107 (IRELIKKESF…KLIINVEEIK (69 aa)). Positions 216 to 244 (LPVYKNKKNDKNKKRRNNNRKGKSQAAKN) are disordered. Basic residues predominate over residues 220–238 (KNKKNDKNKKRRNNNRKGK).

Belongs to the universal ribosomal protein uS3 family. In terms of assembly, part of the 30S ribosomal subunit. Forms a tight complex with proteins S10 and S14.

Functionally, binds the lower part of the 30S subunit head. Binds mRNA in the 70S ribosome, positioning it for translation. The sequence is that of Small ribosomal subunit protein uS3 from Finegoldia magna (strain ATCC 29328 / DSM 20472 / WAL 2508) (Peptostreptococcus magnus).